A 325-amino-acid chain; its full sequence is Xylosidase/arabinosidase (325 aa).

The Proton acceptor role is filled by D16. The active-site Proton donor is the E224.

It belongs to the glycosyl hydrolase 43 family.

The catalysed reaction is Hydrolysis of (1-&gt;4)-beta-D-xylans, to remove successive D-xylose residues from the non-reducing termini.. The enzyme catalyses Hydrolysis of terminal non-reducing alpha-L-arabinofuranoside residues in alpha-L-arabinosides.. This is Xylosidase/arabinosidase (xsa) from Bacteroides ovatus.